The sequence spans 374 residues: Peroxisome biogenesis factor 10 (374 aa).

Polar residues-rich tracts occupy residues 1–11 (MSNVQSQSNSH) and 18–31 (VNRS…QQIR). The Peroxisomal matrix segment spans residues 1 to 82 (MSNVQSQSNS…NSNLYPSYAD (82 aa)). Positions 1 to 82 (MSNVQSQSNS…NSNLYPSYAD (82 aa)) are disordered. Over residues 35 to 76 (PTNNNNNNNNNSINNINNNTQRQPLNNNNNNNNNINRNNSNL) the composition is skewed to low complexity. Residues 83–112 (QPDILRSSQKDEYYKKLFEDQCFEMLTRIT) traverse the membrane as a helical segment. Residue glycine 113 is a topological domain, cytoplasmic. A helical transmembrane segment spans residues 114-135 (PRFIMNRQSESKLLANTIYYLL). At 136 to 165 (TTMIGSQTLGEEYCNLRKIKDKTFSIPSIP) the chain is on the peroxisomal matrix side. A helical transmembrane segment spans residues 166-181 (DRIKLYFFHLLAPYLI). Over 182–192 (KKSLPKLFQRH) the chain is Cytoplasmic. The helical transmembrane segment at 193–216 (PKLYILKEIFPKFERLHLALFYFN) threads the bilayer. Residues 217–243 (GSYFEFSKRLSDIRYIFNRKIDQKRPK) are Peroxisomal matrix-facing. The helical transmembrane segment at 244 to 263 (YDILGLLIIIQILLSTFMYL) threads the bilayer. The Cytoplasmic segment spans residues 264–374 (KENSFFLKQQ…IRTCVPLYNY (111 aa)). The Zn(2+) site is built by cysteine 322, cysteine 325, cysteine 337, histidine 339, cysteine 342, cysteine 345, cysteine 356, and cysteine 359. Residues 322 to 360 (CTLCLEVRTHTTATICGHLFCWHCITEWCNNKEQCPVCR) form an RING-type zinc finger.

This sequence belongs to the pex2/pex10/pex12 family. As to quaternary structure, component of the PEX2-PEX10-PEX12 retrotranslocation channel.

It is found in the peroxisome membrane. It carries out the reaction S-ubiquitinyl-[E2 ubiquitin-conjugating enzyme]-L-cysteine + [acceptor protein]-L-lysine = [E2 ubiquitin-conjugating enzyme]-L-cysteine + N(6)-ubiquitinyl-[acceptor protein]-L-lysine.. It participates in protein modification; protein ubiquitination. With respect to regulation, the E3 ubiquitin-protein ligase activity is stimulated by PEX12. Its function is as follows. E3 ubiquitin-protein ligase component of a retrotranslocation channel required for peroxisome organization by mediating export of the PEX5 receptor from peroxisomes to the cytosol, thereby promoting PEX5 recycling. The retrotranslocation channel is composed of PEX2, PEX10 and PEX12; each subunit contributing transmembrane segments that coassemble into an open channel that specifically allows the passage of PEX5 through the peroxisomal membrane. PEX10 also regulates PEX5 recycling by acting as a E3 ubiquitin-protein ligase. When PEX5 recycling is compromised, PEX10 catalyzes polyubiquitination of PEX5 during its passage through the retrotranslocation channel, leading to its degradation. The chain is Peroxisome biogenesis factor 10 (pex10) from Dictyostelium discoideum (Social amoeba).